Consider the following 251-residue polypeptide: MPATVLITGGNRGLGKGLVATYLSTPDTTVIATVRDPSKCESLSALPKALGSNLLLVKLEVTSKDSITTAIGTLDTHNIGSIDVVIANAGISGPTSSLAEAPVSELQRYIDVNAYGPFELFKAVLPLLRSSNSGNKAKFVCISSAGGSLAAMYNFMPISAYGASKALANFLVKWLALDNKDIIIWAQNPGSVDTDMARDGLDLAKSLGFDLSSLSFTSPEESACAIKKLIDGATTEMSGKFLDHDGSELAW.

NADP(+)-binding residues include L14, T33, E60, N88, and K122. Catalysis depends on proton donor residues S143 and Y161. NADP(+)-binding residues include Y161, K165, V192, and T194. K165 serves as the catalytic Lowers pKa of active site Tyr.

Belongs to the short-chain dehydrogenases/reductases (SDR) family.

The protein operates within secondary metabolite biosynthesis; terpenoid biosynthesis. Functionally, short chain dehydrogenase; part of the gene cluster that mediates the biosynthesis of griseofulvin, an important antifungal drug that has been in use for a long time for treating dermatophyte infections. The first step of the pathway is the formation of the heptaketide backbone by gsfA which is initiated by priming with acetyl-CoA, followed by sequential condensations of 6 malonyl-CoA units. The resulting benzophenone can undergo a spontaneous dehydration to form norlichexanthone. However, the true precursor for the griseofulvin biosynthesis is not norlichexanthone, but the heptaketide benzophenone that is O-methylated at 3-OH by gsfB to produce griseophenone D which is further methylated at 9-OH by gsfC to yield griseophenone C. Griseophenone C is then substrate of halogenase gsfI which is responsible for the regio-specific chlorination at the C13 position to form griseophenone B. The cytochrome P450 gsfF catalyzes the coupling of orcinol and phloroglucinol rings in griseophenone B to form desmethyl-dehydrogriseofulvin A which is further methylated at 5-OH by gsfD to yield dehydrogriseofulvin. Finally, gsfE performs stereospecific reduction of enone 18 of dehydrogriseofulvin to afford the final product griseofulvin. The exact role of gsfK within the pathway has not been identified yet. In Penicillium aethiopicum, this protein is Short chain dehydrogenase gsfK.